Here is a 61-residue protein sequence, read N- to C-terminus: Large ribosomal subunit protein uL30 (61 aa).

This sequence belongs to the universal ribosomal protein uL30 family. In terms of assembly, part of the 50S ribosomal subunit.

The protein is Large ribosomal subunit protein uL30 of Bordetella petrii (strain ATCC BAA-461 / DSM 12804 / CCUG 43448).